The sequence spans 482 residues: Coagulation factor X (482 aa).

A signal peptide spans 1–20 (MESPVRLSLLYVVLASLLLP). A propeptide spanning residues 21–40 (GRSVFINRERANNVLQRIRR) is cleaved from the precursor. Residues 41 to 85 (ANSFFEEIKKGNLERECVEEICSFEEAREVFEDNEKTTEFWNKYE) form the Gla domain. A 4-carboxyglutamate mark is found at Glu46, Glu47, Glu54, Glu56, Glu59, Glu60, Glu65, Glu66, Glu69, Glu72, Glu75, and Glu79. Cys57 and Cys62 form a disulfide bridge. Positions 86–122 (DGDQCESSPCQNQGECRDGLGSYTCTCTEGFEGKNCE) constitute an EGF-like 1; calcium-binding domain. Intrachain disulfides connect Cys90/Cys101, Cys95/Cys110, Cys112/Cys121, Cys129/Cys140, Cys136/Cys149, Cys151/Cys164, Cys172/Cys340, Cys238/Cys243, Cys259/Cys275, Cys388/Cys402, and Cys413/Cys441. Asp103 is modified ((3R)-3-hydroxyaspartate). The 41-residue stretch at 125 to 165 (VRKLCSLDNGDCDQFCREEQNSVVCSCAKGYFLGNDGKSCL) folds into the EGF-like 2 domain. Residues 184-231 (VALNTSNSEPDPEDLMPDADILYPTESPSELLNLNKTEPEANSDDVIR) constitute a propeptide, activation peptide. N-linked (GlcNAc...) asparagine glycans are attached at residues Asn187 and Asn218. The Peptidase S1 domain occupies 232 to 465 (IVGGQECKRG…FLKWIDRSMK (234 aa)). Catalysis depends on charge relay system residues His274 and Asp320. Ser417 (charge relay system) is an active-site residue.

This sequence belongs to the peptidase S1 family. In terms of assembly, the two chains are formed from a single-chain precursor by the excision of two Arg residues and are held together by 1 or more disulfide bonds. Forms a heterodimer with SERPINA5. Interacts with ixolaris, an anticoagulant protein from Ixodes scapularis saliva. In terms of processing, the vitamin K-dependent, enzymatic carboxylation of some glutamate residues allows the modified protein to bind calcium. Post-translationally, N- and O-glycosylated. Proteolytically cleaved and activated by cathepsin CTSG. The activation peptide is cleaved by factor IXa (in the intrinsic pathway), or by factor VIIa (in the extrinsic pathway). In terms of processing, the iron and 2-oxoglutarate dependent 3-hydroxylation of aspartate and asparagine is (R) stereospecific within EGF domains. Plasma; synthesized in the liver.

It localises to the secreted. The enzyme catalyses Selective cleavage of Arg-|-Thr and then Arg-|-Ile bonds in prothrombin to form thrombin.. Its activity is regulated as follows. Inhibited by SERPINA5. Functionally, factor Xa is a vitamin K-dependent glycoprotein that converts prothrombin to thrombin in the presence of factor Va, calcium and phospholipid during blood clotting. Factor Xa activates pro-inflammatory signaling pathways in a protease-activated receptor (PAR)-dependent manner. The protein is Coagulation factor X (F10) of Rattus norvegicus (Rat).